A 371-amino-acid chain; its full sequence is Maltose/maltodextrin import ATP-binding protein MalK (371 aa).

Residues 4 to 234 (VQLQNVTKAW…PADRFVAGFI (231 aa)) enclose the ABC transporter domain. Residue 36–43 (GPSGCGKS) coordinates ATP.

This sequence belongs to the ABC transporter superfamily. Maltooligosaccharide importer (TC 3.A.1.1.1) family. In terms of assembly, the complex is composed of two ATP-binding proteins (MalK), two transmembrane proteins (MalG and MalK) and a solute-binding protein (MalE).

It is found in the cell inner membrane. The catalysed reaction is D-maltose(out) + ATP + H2O = D-maltose(in) + ADP + phosphate + H(+). Its function is as follows. Part of the ABC transporter complex MalEFGK involved in maltose/maltodextrin import. Responsible for energy coupling to the transport system. The polypeptide is Maltose/maltodextrin import ATP-binding protein MalK (Escherichia coli O6:H1 (strain CFT073 / ATCC 700928 / UPEC)).